The following is a 366-amino-acid chain: NADH-quinone oxidoreductase subunit H (366 aa).

Transmembrane regions (helical) follow at residues 27–47, 99–119, 134–154, 168–188, 206–226, 268–288, 294–314, and 329–349; these read LLLILAIVIPLLLAVAYLTFA, FLFLLAPVLAIGPALAAWAVV, LLYILAMTSLGVYGVIIAGWA, AAQVVSYELAMGFALVCVLMM, FLNWYLIPLFPMFLVYFISGV, ILVATLASIMFLGGWLPPVDI, IPGMVWLLLKIAFMLFFFLWF, and LGWKVFIPLTLVWIVVLGMVM.

Belongs to the complex I subunit 1 family. NDH-1 is composed of 14 different subunits. Subunits NuoA, H, J, K, L, M, N constitute the membrane sector of the complex.

Its subcellular location is the cell inner membrane. The enzyme catalyses a quinone + NADH + 5 H(+)(in) = a quinol + NAD(+) + 4 H(+)(out). Functionally, NDH-1 shuttles electrons from NADH, via FMN and iron-sulfur (Fe-S) centers, to quinones in the respiratory chain. The immediate electron acceptor for the enzyme in this species is believed to be ubiquinone. Couples the redox reaction to proton translocation (for every two electrons transferred, four hydrogen ions are translocated across the cytoplasmic membrane), and thus conserves the redox energy in a proton gradient. This subunit may bind ubiquinone. This Nitrosomonas europaea (strain ATCC 19718 / CIP 103999 / KCTC 2705 / NBRC 14298) protein is NADH-quinone oxidoreductase subunit H.